A 609-amino-acid chain; its full sequence is Proteasome-associated ATPase (609 aa).

The disordered stretch occupies residues methionine 1–glutamate 25. Residues serine 19–glutamine 96 are a coiled coil. Residue glycine 296–leucine 301 participates in ATP binding. The docks into pockets in the proteasome alpha-ring stretch occupies residues tyrosine 608–leucine 609.

It belongs to the AAA ATPase family. As to quaternary structure, homohexamer. Assembles into a hexameric ring structure that caps the 20S proteasome core. Strongly interacts with the prokaryotic ubiquitin-like protein Pup through a hydrophobic interface; the interacting region of ARC lies in its N-terminal coiled-coil domain. There is one Pup binding site per ARC hexamer ring. Upon ATP-binding, the C-terminus of ARC interacts with the alpha-rings of the proteasome core, possibly by binding to the intersubunit pockets.

It functions in the pathway protein degradation; proteasomal Pup-dependent pathway. Functionally, ATPase which is responsible for recognizing, binding, unfolding and translocation of pupylated proteins into the bacterial 20S proteasome core particle. May be essential for opening the gate of the 20S proteasome via an interaction with its C-terminus, thereby allowing substrate entry and access to the site of proteolysis. Thus, the C-termini of the proteasomal ATPase may function like a 'key in a lock' to induce gate opening and therefore regulate proteolysis. The sequence is that of Proteasome-associated ATPase from Mycobacterium marinum (strain ATCC BAA-535 / M).